The following is a 240-amino-acid chain: Lysoplasmalogenase TMEM86A (240 aa).

At 1 to 21 the chain is on the cytoplasmic side; sequence MVSPVTVVKSEGPKLVPFFKA. Residues 22–42 form a helical membrane-spanning segment; the sequence is TCVYFVLWLPSSSPSWVSALI. Lys43 is a topological domain (extracellular). The helical transmembrane segment at 44–64 threads the bilayer; it reads CLPIFCLWLFLLAHGLGFLLT. The Cytoplasmic portion of the chain corresponds to 65-70; that stretch reads HPSATR. The helical transmembrane segment at 71 to 91 threads the bilayer; that stretch reads IFVGLVFSAIGDAFLIWQDQG. A topological domain (extracellular) is located at residue Tyr92. The helical transmembrane segment at 93 to 113 threads the bilayer; that stretch reads FVHGMLMFAVTHMLYASAFGM. Residues 114–115 are Cytoplasmic-facing; the sequence is RP. Residues 116–136 traverse the membrane as a helical segment; sequence LGLRTGLLMVILSGLCYAFLY. At 137–138 the chain is on the extracellular side; the sequence is PN. Residues 139-159 traverse the membrane as a helical segment; that stretch reads LTGAFTYVVGVYVAIIGFMGW. Residues 160–174 are Cytoplasmic-facing; sequence RAMAGLQLVGAAWRW. A helical transmembrane segment spans residues 175-195; it reads TELAAGTGALLFIVSDLTIAL. At 196–206 the chain is on the extracellular side; the sequence is DKFCFPVPYSR. A helical transmembrane segment spans residues 207–227; that stretch reads ALIMSTYYAAQMLIALSAVES. Residues 228-240 lie on the Cytoplasmic side of the membrane; it reads REPVEDYRLSKAK.

The protein belongs to the TMEM86 family.

The protein resides in the endoplasmic reticulum membrane. The enzyme catalyses a 1-O-(1Z-alkenyl)-sn-glycero-3-phosphocholine + H2O = a 2,3-saturated aldehyde + sn-glycerol 3-phosphocholine. It carries out the reaction a 1-O-(1Z-alkenyl)-sn-glycero-3-phosphoethanolamine + H2O = a 2,3-saturated aldehyde + sn-glycero-3-phosphoethanolamine. Its function is as follows. Catalyzes the hydrolysis of the vinyl ether bond of choline or ethanolamine lysoplasmalogens, forming fatty aldehyde and glycerophosphocholine or glycerophosphoethanolamine, respectively and is specific for the sn-2-deacylated (lyso) form of plasmalogen. Plays an important role in lysoplasmalogen metabolism in the adipocyte tissue and macrophages. This is Lysoplasmalogenase TMEM86A (TMEM86A) from Bos taurus (Bovine).